Reading from the N-terminus, the 325-residue chain is ATP phosphoribosyltransferase (325 aa).

It belongs to the ATP phosphoribosyltransferase family. Long subfamily. Mg(2+) serves as cofactor.

The protein resides in the cytoplasm. The enzyme catalyses 1-(5-phospho-beta-D-ribosyl)-ATP + diphosphate = 5-phospho-alpha-D-ribose 1-diphosphate + ATP. It participates in amino-acid biosynthesis; L-histidine biosynthesis; L-histidine from 5-phospho-alpha-D-ribose 1-diphosphate: step 1/9. Its activity is regulated as follows. Feedback inhibited by histidine. In terms of biological role, catalyzes the condensation of ATP and 5-phosphoribose 1-diphosphate to form N'-(5'-phosphoribosyl)-ATP (PR-ATP). Has a crucial role in the pathway because the rate of histidine biosynthesis seems to be controlled primarily by regulation of HisG enzymatic activity. The polypeptide is ATP phosphoribosyltransferase (Bradyrhizobium sp. (strain ORS 278)).